A 372-amino-acid chain; its full sequence is Chaperone protein DnaJ (372 aa).

Positions 5–69 constitute a J domain; it reads DYYEVLGVDR…QKKARYDQFG (65 aa). The CR-type zinc finger occupies 129–211; the sequence is GKETEIEIPR…CSGKGKVRKR (83 aa). Residues Cys142, Cys145, Cys159, Cys162, Cys185, Cys188, Cys199, and Cys202 each coordinate Zn(2+). CXXCXGXG motif repeat units lie at residues 142–149, 159–166, 185–192, and 199–206; these read CGTCHGSG, CSHCGGSG, CNYCEGTG, and CATCSGKG.

This sequence belongs to the DnaJ family. In terms of assembly, homodimer. Zn(2+) serves as cofactor.

The protein localises to the cytoplasm. In terms of biological role, participates actively in the response to hyperosmotic and heat shock by preventing the aggregation of stress-denatured proteins and by disaggregating proteins, also in an autonomous, DnaK-independent fashion. Unfolded proteins bind initially to DnaJ; upon interaction with the DnaJ-bound protein, DnaK hydrolyzes its bound ATP, resulting in the formation of a stable complex. GrpE releases ADP from DnaK; ATP binding to DnaK triggers the release of the substrate protein, thus completing the reaction cycle. Several rounds of ATP-dependent interactions between DnaJ, DnaK and GrpE are required for fully efficient folding. Also involved, together with DnaK and GrpE, in the DNA replication of plasmids through activation of initiation proteins. This Shouchella clausii (strain KSM-K16) (Alkalihalobacillus clausii) protein is Chaperone protein DnaJ.